Consider the following 337-residue polypeptide: Cytoskeleton protein RodZ (337 aa).

Over 1–111 (MNTEATHDQN…LGKRRKKRDG (111 aa)) the chain is Cytoplasmic. In terms of domain architecture, HTH cro/C1-type spans 19–71 (LRNAREQLGLSQQAVAERLCLKVSTVRDIEEDKAPADLASTFLRGYIRSYARL). A DNA-binding region (H-T-H motif) is located at residues 30–49 (QQAVAERLCLKVSTVRDIEE). A helical; Signal-anchor for type II membrane protein transmembrane segment spans residues 112 to 132 (WLMTFTWLVLFVVVGLTGAWW). Residues 133-337 (WQNHKAQQEE…TLNAEQSPAQ (205 aa)) are Periplasmic-facing. A disordered region spans residues 155-220 (NAGGDSAQSV…QNAVVAPSQA (66 aa)). A compositionally biased stretch (polar residues) spans 160-192 (SAQSVPLDTSEAASQDSTPAPTAPVDSTATNAV). Over residues 193-217 (PQTPDASATTTAPAADAQQNAVVAP) the composition is skewed to low complexity.

The protein belongs to the RodZ family.

It is found in the cell inner membrane. Functionally, cytoskeletal protein that is involved in cell-shape control through regulation of the length of the long axis. The chain is Cytoskeleton protein RodZ from Citrobacter koseri (strain ATCC BAA-895 / CDC 4225-83 / SGSC4696).